Here is a 233-residue protein sequence, read N- to C-terminus: Small ribosomal subunit protein uS3 (233 aa).

A KH type-2 domain is found at 39–107 (IRAFLKRKLY…DVNINIKEER (69 aa)). Basic and acidic residues predominate over residues 212-222 (MQPEKTEESAP). Residues 212–233 (MQPEKTEESAPAKKPRRTRRGK) are disordered. The segment covering 224-233 (KKPRRTRRGK) has biased composition (basic residues).

The protein belongs to the universal ribosomal protein uS3 family. In terms of assembly, part of the 30S ribosomal subunit. Forms a tight complex with proteins S10 and S14.

Functionally, binds the lower part of the 30S subunit head. Binds mRNA in the 70S ribosome, positioning it for translation. This Campylobacter jejuni subsp. jejuni serotype O:6 (strain 81116 / NCTC 11828) protein is Small ribosomal subunit protein uS3.